A 288-amino-acid chain; its full sequence is Single myb histone 4 (288 aa).

3 disordered regions span residues 1 to 42 (MGAP…PVLS), 62 to 87 (GLGSSKLRVPKITGPSSSPSSSSQPL), and 181 to 206 (DSLATRTPAPMNASAPKQKDPSKPSK). The region spanning 1 to 60 (MGAPKQKWTSEEEDALRAGVRKHGAGKWRTIQKDPEFSPVLSSRSNIDLKDKWRNLSFSA) is the HTH myb-type domain. The segment at residues 28–56 (WRTIQKDPEFSPVLSSRSNIDLKDKWRNL) is a DNA-binding region (H-T-H motif). Residues 76-87 (PSSSPSSSSQPL) are compositionally biased toward low complexity. The H15 domain maps to 113–181 (TLPKYGAMIM…KIDKSYRLPD (69 aa)). A coiled-coil region spans residues 230 to 250 (KVADAEAKAHDAHDQTMEAER).

This sequence belongs to the histone H1/H5 family. SMH subfamily. Forms a homodimer and heterodimers.

The protein localises to the nucleus. It is found in the chromosome. Its subcellular location is the nucleolus. The protein resides in the telomere. Functionally, binds preferentially double-stranded telomeric repeats, but may also bind to the single telomeric strand. This is Single myb histone 4 (SMH4) from Zea mays (Maize).